The following is a 419-amino-acid chain: Transcription factor 7 (419 aa).

Gly residues predominate over residues 1–12 (MPQLDSGGGGAG). Residues 1 to 60 (MPQLDSGGGGAGRGDDLGAPDELLAFQDEGEEQDDKNRDSPVGPERDLAELKSSLVNESE) form a CTNNB1-binding region. Disordered regions lie at residues 1 to 111 (MPQL…LKAP) and 134 to 200 (PASG…SGFY). 2 stretches are compositionally biased toward basic and acidic residues: residues 35–50 (DKNR…DLAE) and 86–109 (LGRE…DGLK). Residues 143 to 158 (QPQPPLHNKPGQPPHG) show a composition bias toward pro residues. Residues 304 to 372 (IKKPLNAFML…LHMQLYPGWS (69 aa)) constitute a DNA-binding region (HMG box). A disordered region spans residues 374 to 406 (RDNYGKKKRRSREKHQESTTGGKRNAFGTYPEK). The Nuclear localization signal signature appears at 379–385 (KKKRRSR).

This sequence belongs to the TCF/LEF family. In terms of assembly, binds the armadillo repeat of CTNNB1 and forms a stable complex. Binds TLE5, TLE1, TLE2, TLE3 and TLE4. Interacts with MLLT11. Interacts with DAZAP2. Interacts (via N-terminus) with SOX13; inhibits WNT-mediated transcriptional activity. In terms of tissue distribution, T-cell specific. Expressed in triple negative 2 subpopulations of T-cells and both the gamma-delta and alpha-beta T-cell lineages. Expressed in Il7 receptor positive innate-like T-cells in the mesenteric lymph nodes and spleen (at protein level).

The protein localises to the nucleus. Functionally, transcriptional activator involved in T-cell lymphocyte differentiation. Necessary for the survival of CD4(+) CD8(+) immature thymocytes. Isoforms lacking the N-terminal CTNNB1 binding domain cannot fulfill this role. Binds to the T-lymphocyte-specific enhancer element (5'-WWCAAAG-3') found in the promoter of the CD3E gene. Represses expression of the T-cell receptor gamma gene in alpha-beta T-cell lineages. Inhibits the developmental program of IL17A effector gamma-delta T-cell subsets via regulating the transcription of T-cell lineage effector proteins. Required for the development of natural killer receptor-positive lymphoid tissue inducer T-cells. TLE1, TLE2, TLE3 and TLE4 repress transactivation mediated by TCF7 and CTNNB1. May also act as feedback transcriptional repressor of CTNNB1 and TCF7L2 target genes. This Mus musculus (Mouse) protein is Transcription factor 7.